The chain runs to 108 residues: Thiosulfate sulfurtransferase GlpE (108 aa).

A Rhodanese domain is found at 17–105 (VSQSAILVDV…WLREFPQAIT (89 aa)). The active-site Cysteine persulfide intermediate is the Cys-65.

The protein belongs to the GlpE family.

It is found in the cytoplasm. The catalysed reaction is thiosulfate + hydrogen cyanide = thiocyanate + sulfite + 2 H(+). It carries out the reaction thiosulfate + [thioredoxin]-dithiol = [thioredoxin]-disulfide + hydrogen sulfide + sulfite + 2 H(+). In terms of biological role, transferase that catalyzes the transfer of sulfur from thiosulfate to thiophilic acceptors such as cyanide or dithiols. May function in a CysM-independent thiosulfate assimilation pathway by catalyzing the conversion of thiosulfate to sulfite, which can then be used for L-cysteine biosynthesis. The sequence is that of Thiosulfate sulfurtransferase GlpE from Proteus mirabilis (strain HI4320).